The chain runs to 174 residues: Adenylate kinase (174 aa).

The tract at residues Ser12 to Val41 is NMP. AMP is bound by residues Thr13, Arg18, Gly39 to Val41, Gly67 to Arg70, and Gln74. The LID stretch occupies residues Gly104–Asp141. Residues Arg105 and Thr114–Tyr115 contribute to the ATP site. AMP-binding residues include Arg138 and Arg149.

This sequence belongs to the adenylate kinase family. In terms of assembly, monomer.

It is found in the cytoplasm. It carries out the reaction AMP + ATP = 2 ADP. It participates in purine metabolism; AMP biosynthesis via salvage pathway; AMP from ADP: step 1/1. Functionally, catalyzes the reversible transfer of the terminal phosphate group between ATP and AMP. Plays an important role in cellular energy homeostasis and in adenine nucleotide metabolism. This Neisseria flavescens protein is Adenylate kinase.